The sequence spans 308 residues: tRNA uridine(34) hydroxylase (308 aa).

The Rhodanese domain maps to 128–222; the sequence is ADENTVVVDT…YLEEVPREQS (95 aa). Cys182 functions as the Cysteine persulfide intermediate in the catalytic mechanism.

This sequence belongs to the TrhO family.

It carries out the reaction uridine(34) in tRNA + AH2 + O2 = 5-hydroxyuridine(34) in tRNA + A + H2O. Catalyzes oxygen-dependent 5-hydroxyuridine (ho5U) modification at position 34 in tRNAs. This chain is tRNA uridine(34) hydroxylase, found in Brucella suis biovar 1 (strain 1330).